A 162-amino-acid polypeptide reads, in one-letter code: Allophycocyanin subunit beta (162 aa).

N72 carries the N4-methylasparagine modification. C82 is a binding site for (2R,3E)-phycocyanobilin.

This sequence belongs to the phycobiliprotein family. As to quaternary structure, heterohexamer of two alpha chains, one alpha-B chain and three beta chains. In terms of processing, contains one covalently linked phycocyanobilin chromophore. The chromophore is added by phycocyanobilin lyase CpcS 1.

The protein resides in the cellular thylakoid membrane. Light-harvesting photosynthetic bile pigment-protein from the phycobiliprotein complex. Allophycocyanin has a maximum absorption at approximately 650 to 653 nanometers. In Nostoc sp. (strain PCC 7120 / SAG 25.82 / UTEX 2576), this protein is Allophycocyanin subunit beta (apcB).